Consider the following 291-residue polypeptide: Aspartate carbamoyltransferase catalytic subunit (291 aa).

Arginine 49 and threonine 50 together coordinate carbamoyl phosphate. Lysine 77 serves as a coordination point for L-aspartate. The carbamoyl phosphate site is built by arginine 99, histidine 127, and glutamine 130. L-aspartate is bound by residues arginine 160 and arginine 210. The carbamoyl phosphate site is built by glycine 249 and proline 250.

This sequence belongs to the aspartate/ornithine carbamoyltransferase superfamily. ATCase family. As to quaternary structure, heterododecamer (2C3:3R2) of six catalytic PyrB chains organized as two trimers (C3), and six regulatory PyrI chains organized as three dimers (R2).

The catalysed reaction is carbamoyl phosphate + L-aspartate = N-carbamoyl-L-aspartate + phosphate + H(+). It participates in pyrimidine metabolism; UMP biosynthesis via de novo pathway; (S)-dihydroorotate from bicarbonate: step 2/3. Its function is as follows. Catalyzes the condensation of carbamoyl phosphate and aspartate to form carbamoyl aspartate and inorganic phosphate, the committed step in the de novo pyrimidine nucleotide biosynthesis pathway. The chain is Aspartate carbamoyltransferase catalytic subunit from Sulfurimonas denitrificans (strain ATCC 33889 / DSM 1251) (Thiomicrospira denitrificans (strain ATCC 33889 / DSM 1251)).